Here is a 240-residue protein sequence, read N- to C-terminus: Allene oxide cyclase, chloroplastic (240 aa).

The transit peptide at 1–49 directs the protein to the chloroplast; it reads MAAAAPSRVSVRAAAPGQTGGFAKIRPQVVVAAAARSAGVSGRRARSVR.

Belongs to the allene oxide cyclase family.

It is found in the plastid. The protein localises to the chloroplast. The enzyme catalyses (9Z,13S,15Z)-12,13-epoxyoctadeca-9,11,15-trienoate = (9S,13S,15Z)-12-oxophyto-10,15-dienoate. It participates in lipid metabolism; polyunsaturated fatty acid biosynthesis. In terms of biological role, involved in the production of 12-oxo-phytodienoic acid (OPDA), a precursor of jasmonic acid (JA). Required for the production of JA in response to wounding. Necessary for flower and coleoptile development regulation by light, including blue (BL), red (RL) and far red (FR) lights. Involved in the auxin-mediated signaling pathway leading to growth stimulation. Essential for photodestruction of phyA upon activation by RL and FR. Implicated in responses to salt stress (NaCl). Its function is as follows. Confers resistance to incompatible strains of the blast fungus Magnaporthe grisea, jasmonic acid (JA) thus playing a significant role in the resistance to fungal infection. Implicated in riboflavin-induced resistance to the sheath blight Rhizoctonia solani. Required for Pseudomonas fluorescens-mediated JA-dependent induced systemic resistance (ISR). Confers some resistance, independently of the JA pathway but probably via OPDA accumulation, to brown planthopper (BPH, Nilaparvata lugens), a destructive, monophagous, piercing-sucking insect, mainly by reducing its feeding activity and survival rate. Triggers resistance to the chewing insect striped stem borer (SSB) Chilo suppressalis, to the root hemiparasite witchweed Striga hermonthica, and to the root feeder insect rice water weevil Lissorhoptrus oryzophilus, in a JA-dependent manner, by attenuating both the growth mass and growth rate of caterpillars. The chain is Allene oxide cyclase, chloroplastic from Oryza sativa subsp. indica (Rice).